The sequence spans 182 residues: Lipid A acyltransferase PagP (182 aa).

The first 21 residues, 1–21 (MTQYFRSLAFFLLPVPATAMA), serve as a signal peptide directing secretion. The N-palmitoyl cysteine moiety is linked to residue cysteine 22. A lipid anchor (S-diacylglycerol cysteine) is attached at cysteine 22. Residues histidine 55, aspartate 98, and serine 99 contribute to the active site.

The protein belongs to the lipid A palmitoyltransferase family. In terms of assembly, homodimer.

It is found in the cell outer membrane. The enzyme catalyses a lipid A + a 1,2-diacyl-sn-glycero-3-phosphocholine = a hepta-acyl lipid A + a 2-acyl-sn-glycero-3-phosphocholine. It carries out the reaction a lipid IVA + a 1,2-diacyl-sn-glycero-3-phosphocholine = a lipid IVB + a 2-acyl-sn-glycero-3-phosphocholine. The catalysed reaction is a lipid IIA + a 1,2-diacyl-sn-glycero-3-phosphocholine = a lipid IIB + a 2-acyl-sn-glycero-3-phosphocholine. In terms of biological role, transfers a fatty acid residue from the sn-1 position of a phospholipid to the N-linked hydroxyfatty acid chain on the proximal unit of lipid A or its precursors. This Bordetella pertussis (strain CS) protein is Lipid A acyltransferase PagP.